Here is a 230-residue protein sequence, read N- to C-terminus: uncharacterized protein (230 aa).

An N-terminal signal peptide occupies residues 1–16; the sequence is MTCVNVCFFLFPPCHR. The next 4 helical transmembrane spans lie at 27–47, 118–138, 150–170, and 172–191; these read VDLL…IPLI, LFFF…FLFF, FPIL…LSFL, and SLSH…LRVF.

Its subcellular location is the cytoplasm. It localises to the nucleus membrane. This is an uncharacterized protein from Schizosaccharomyces pombe (strain 972 / ATCC 24843) (Fission yeast).